The primary structure comprises 89 residues: Small ribosomal subunit protein uS15 (89 aa).

It belongs to the universal ribosomal protein uS15 family. Part of the 30S ribosomal subunit. Forms a bridge to the 50S subunit in the 70S ribosome, contacting the 23S rRNA.

Functionally, one of the primary rRNA binding proteins, it binds directly to 16S rRNA where it helps nucleate assembly of the platform of the 30S subunit by binding and bridging several RNA helices of the 16S rRNA. In terms of biological role, forms an intersubunit bridge (bridge B4) with the 23S rRNA of the 50S subunit in the ribosome. The polypeptide is Small ribosomal subunit protein uS15 (Anaeromyxobacter dehalogenans (strain 2CP-1 / ATCC BAA-258)).